The primary structure comprises 211 residues: ATP-dependent Clp protease proteolytic subunit 1 (211 aa).

The active-site Nucleophile is Ser107. His132 is a catalytic residue.

It belongs to the peptidase S14 family. In terms of assembly, fourteen ClpP subunits assemble into 2 heptameric rings which stack back to back to give a disk-like structure with a central cavity, resembling the structure of eukaryotic proteasomes.

It is found in the cytoplasm. It catalyses the reaction Hydrolysis of proteins to small peptides in the presence of ATP and magnesium. alpha-casein is the usual test substrate. In the absence of ATP, only oligopeptides shorter than five residues are hydrolyzed (such as succinyl-Leu-Tyr-|-NHMec, and Leu-Tyr-Leu-|-Tyr-Trp, in which cleavage of the -Tyr-|-Leu- and -Tyr-|-Trp bonds also occurs).. In terms of biological role, cleaves peptides in various proteins in a process that requires ATP hydrolysis. Has a chymotrypsin-like activity. Plays a major role in the degradation of misfolded proteins. This chain is ATP-dependent Clp protease proteolytic subunit 1, found in Mycolicibacterium paratuberculosis (strain ATCC BAA-968 / K-10) (Mycobacterium paratuberculosis).